A 161-amino-acid chain; its full sequence is Ribosome maturation factor RimP (161 aa).

This sequence belongs to the RimP family.

The protein resides in the cytoplasm. In terms of biological role, required for maturation of 30S ribosomal subunits. In Herminiimonas arsenicoxydans, this protein is Ribosome maturation factor RimP.